Reading from the N-terminus, the 331-residue chain is Phosphoribosylformylglycinamidine cyclo-ligase (331 aa).

The protein belongs to the AIR synthase family.

The protein localises to the cytoplasm. The catalysed reaction is 2-formamido-N(1)-(5-O-phospho-beta-D-ribosyl)acetamidine + ATP = 5-amino-1-(5-phospho-beta-D-ribosyl)imidazole + ADP + phosphate + H(+). It participates in purine metabolism; IMP biosynthesis via de novo pathway; 5-amino-1-(5-phospho-D-ribosyl)imidazole from N(2)-formyl-N(1)-(5-phospho-D-ribosyl)glycinamide: step 2/2. The sequence is that of Phosphoribosylformylglycinamidine cyclo-ligase from Clostridium novyi (strain NT).